Here is a 197-residue protein sequence, read N- to C-terminus: RNA-binding protein with multiple splicing (197 aa).

N-acetylmethionine is present on Met-1. Thr-12 is subject to Phosphothreonine. An RRM domain is found at 24–101 (RTLFVSGLPL…QTLRLEFAKA (78 aa)). Residues 98-105 (FAKANTKM) are interaction with RNA. At Thr-113 the chain carries Phosphothreonine.

As to quaternary structure, homodimer; each protein chain binds one RNA molecule via the external surface of the homodimer. Interacts with RNA binding proteins MBNL1, RBFOX2, RBM4 and RBM14; the interaction allows cooperative assembly of stable cell-specific alternative splicing regulatory complexes. Also interacts with RBM47, MATR3 and ESRP2. Interacts with SMAD2, SMAD3 and SMAD4; the interactions are direct. In terms of tissue distribution, mRNA expressed in developing heart, with significantly higher expression in the atria relative to the ventricles.

It localises to the nucleus. It is found in the cytoplasm. The protein resides in the stress granule. Its subcellular location is the P-body. Its function is as follows. RNA binding protein that mediates the regulation of pre-mRNA alternative splicing (AS). Acts either as activator (FLNB, HSPG2, LIPA1, MYOCD, PTPRF and PPFIBP1) or repressor (TPM1, ACTN1, ITGA7, PIEZO1, LSM14B, MBNL1 and MBML2) of splicing events on specific pre-mRNA targets. Together with RNA binding proteins RBFOX2 and MBNL1/2, activates a splicing program associated with differentiated contractile vascular smooth muscle cells (SMC) by regulating AS of numerous pre-mRNA involved in actin cytoskeleton and focal adhesion machineries, suggesting a role in promoting a cell differentiated state. Binds to introns, exons and 3'-UTR associated with tandem CAC trinucleotide motifs separated by a variable spacer region, at a minimum as a dimer. The minimal length of RNA required for RBPMS-binding tandem CAC motifs is 15 nt, with spacing ranging from 1 to 9 nt. Can also bind to CA dinucleotide repeats. Mediates repression of TPM1 exon 3 by binding to CAC tandem repeats in the flanking intronic regions, followed by higher-order oligomerization and heterotypic interactions with other splicing regulators including MBNL1 and RBFOX2, which prevents assembly of ATP-dependent splicing complexes. The chain is RNA-binding protein with multiple splicing from Mus musculus (Mouse).